We begin with the raw amino-acid sequence, 466 residues long: F-box only protein 15 (466 aa).

The region spanning 27–73 is the F-box domain; that stretch reads SASLDSLPSEVLLKILSYLDAAALLCAGCVNRRFYHLANDNFIWIRI.

Directly interacts with SKP1 and CUL1.

In terms of biological role, substrate-recognition component of the SCF (SKP1-CUL1-F-box protein)-type E3 ubiquitin ligase complex. This Bos taurus (Bovine) protein is F-box only protein 15 (FBXO15).